An 854-amino-acid polypeptide reads, in one-letter code: MKESEGIDLSTHTPMMQQYFRLKAEHPEILLFYRMGDFYELFFDDAKRASQLLDISLTKRGASAGEPIPMAGVPHHAVENYLARLVQMGESVAICEQIGDPATSKGPVERKVVRIVTPGTISDEALLQEKQDNLLAAIWQDGRGFGYATLDISSGRFRVSEPADRETMAAELQRTNPAELLYPESFESMELIDNRHGLRRRPMWEFEPDTARQQLNLQFGTRDLTGFGVEQAKLALRAAGCLLQYAKDTQRTSLPHIRGITMERQQDGIIMDAATRRNLELTQNLSGGVENTLAAVLDCTVTAMGSRMLKRWIHMPSRDIDALKQRQQAISALQEITPDLQPYLRQVGDLERILARLALRTARPRDLARMRHAFQQFPDIREQLAPLDTDSVRRLVSLIGQFDELRDLLERAVVEAPPVLVRDGGVIAPGYHTELDEWRALADGASDYLDRLEIREREKLGLDTLKVGFNGVHGYYIQVSRGQSHLVPIHYVRRQTLKNAERYIIPELKEYEDKVLTSKGKALALEKALYDELFDLLLPHLAELQQSAAALAELDVLTNLAERADTLNYVCPTLSDKPGIKIAGGRHPVVEQVLREPFISNPLSLSPQRRMLIITGPNMGGKSTYMRQAALIVLMAHIGCFVPADQAVIGPVDRIFTRVGAADDLASGRSTFMVEMTETANILHNATENSLVLMDEIGRGTSTYDGLSLAWACAESLANRIKAMTLFATHYFELTTLPEKMEGVVNVHLDAREHGDTIAFMHSVQDGAASKSYGLAVAALAGVPKEVIKRARQKLKELETLSNNASSSHIDGAQLALLNTDEPSPAIEALEAIDPDALTPRQALDWLYQLKKML.

Gly-616–Ser-623 is a binding site for ATP.

Belongs to the DNA mismatch repair MutS family.

Functionally, this protein is involved in the repair of mismatches in DNA. It is possible that it carries out the mismatch recognition step. This protein has a weak ATPase activity. In Pectobacterium atrosepticum (strain SCRI 1043 / ATCC BAA-672) (Erwinia carotovora subsp. atroseptica), this protein is DNA mismatch repair protein MutS.